The sequence spans 494 residues: Trigger factor (494 aa).

Positions 169–254 constitute a PPIase FKBP-type domain; that stretch reads GDRITMDYVG…VKDVAAPGAV (86 aa). Positions 440 to 494 are disordered; sequence LLAEDEGEAKAETKKAAPKKKAAAKSEAAEAGEGEEAAPKKKAAPKKKASEDSAE.

The protein belongs to the FKBP-type PPIase family. Tig subfamily.

It is found in the cytoplasm. It carries out the reaction [protein]-peptidylproline (omega=180) = [protein]-peptidylproline (omega=0). Involved in protein export. Acts as a chaperone by maintaining the newly synthesized protein in an open conformation. Functions as a peptidyl-prolyl cis-trans isomerase. This is Trigger factor from Rhizobium etli (strain ATCC 51251 / DSM 11541 / JCM 21823 / NBRC 15573 / CFN 42).